The following is a 327-amino-acid chain: GMP reductase (327 aa).

Cysteine 175 acts as the Thioimidate intermediate in catalysis. Isoleucine 204–valine 227 provides a ligand contact to NADP(+).

Belongs to the IMPDH/GMPR family. GuaC type 2 subfamily.

The catalysed reaction is IMP + NH4(+) + NADP(+) = GMP + NADPH + 2 H(+). In terms of biological role, catalyzes the irreversible NADPH-dependent deamination of GMP to IMP. It functions in the conversion of nucleobase, nucleoside and nucleotide derivatives of G to A nucleotides, and in maintaining the intracellular balance of A and G nucleotides. This is GMP reductase from Bacillus thuringiensis subsp. konkukian (strain 97-27).